Here is a 202-residue protein sequence, read N- to C-terminus: MEAGLLWFCNWSTLGVCAALKLPQIYAQLAARSARGISLPSLLLELAGFLVFLRYQHYYGNPLLTYLEYPILIAQDIVLLLFVFHFNGNVKQALPYMAVFVSSWFILSLQKWIIDLAMNLCTVISAASKFAQLQYLWKVQDSGAVSALTWGLSAYTCATRIITTLMTTNDLTILIRFVIMLALNIWVTATVLHYRKSATKAE.

Positions 1 to 19 (MEAGLLWFCNWSTLGVCAA) are cleaved as a signal peptide. 4 helical membrane-spanning segments follow: residues 33–53 (SARGISLPSLLLELAGFLVFL), 64–84 (LTYLEYPILIAQDIVLLLFVF), 94–114 (LPYMAVFVSSWFILSLQKWII), and 171–191 (LTILIRFVIMLALNIWVTATV).

It is found in the membrane. The chain is Solute carrier family 66 member 3 (Slc66a3) from Mus musculus (Mouse).